The sequence spans 61 residues: Small ribosomal subunit protein uS14 (61 aa).

Positions 24, 27, 40, and 43 each coordinate Zn(2+).

Belongs to the universal ribosomal protein uS14 family. Zinc-binding uS14 subfamily. In terms of assembly, part of the 30S ribosomal subunit. Contacts proteins S3 and S10. Requires Zn(2+) as cofactor.

In terms of biological role, binds 16S rRNA, required for the assembly of 30S particles and may also be responsible for determining the conformation of the 16S rRNA at the A site. In Finegoldia magna (strain ATCC 29328 / DSM 20472 / WAL 2508) (Peptostreptococcus magnus), this protein is Small ribosomal subunit protein uS14.